Consider the following 442-residue polypeptide: NALCN channel auxiliary factor 2 (442 aa).

Residues 42–62 (LASLLFFTVLLSNHLWLVSAG) form a helical membrane-spanning segment. N-linked (GlcNAc...) asparagine glycans are attached at residues N77, N100, N171, N279, and N354. A helical transmembrane segment spans residues 406-426 (CVLVLMLLHTMASFSVVQNGV).

The protein belongs to the NALF family.

It is found in the membrane. Functionally, probable component of the NALCN channel complex, a channel that regulates the resting membrane potential and controls neuronal excitability. This chain is NALCN channel auxiliary factor 2 (nalf2), found in Xenopus tropicalis (Western clawed frog).